Consider the following 631-residue polypeptide: MLSRVVRQRSRSAISSFKLRAHAAFAETRIGVGISVQATRLQSTKLSANPEEIYTKISDSADPKRNQFFQYTWGSWLENDKLKKSHRETRFSIEGVSNLVQELNLTRKDPANVDSSGEPLLQIKPVQQLKDGSFVLTNNLSNKLIGEAQDKDAKLLVKSIASIHEGKDLVLRIPYKLESDYSISQKIKSEVATLDFLSLKLGLNVPKVVAYGDNRSNALQTPFILMEYIEGDLLMKKWNPLAADSEETDASLKSVIQPISDFQDKILSVNFNKFGSLYFHDDVSVLDQADVPYDGEENPLLVNRWRIGPSIERQFAKNKNHLSEKIVKEFNGPWKADAPLSLITSVASIELENAKNRLGLAQADSASKVEDVEVLKKQIETFEHLQAIGSKLFNSKSKSIMNVEELFRPKLFVPDLDPLNVIESNDKSYFIDFEYSTIKPFILTSYPNFVAYHGAKVYNLEEDIPGFTEMDEVEKQQYEFMYYKTRNERLWELELNSRRHDLIAVASPHVKVLKSPYLQALELKTDKDYLYVEGAIVQLQAMWDAYVANELCGSSSSEFPVQYTEEFLDRHQTDLEEYQIETVSSPFAATGGWIPQDMFETLKEQGIIVETENGNYKVEAEKALEEEPEEK.

Residues 1–41 constitute a mitochondrion transit peptide; the sequence is MLSRVVRQRSRSAISSFKLRAHAAFAETRIGVGISVQATRL.

This sequence belongs to the AIM9 family.

The protein localises to the mitochondrion. This Scheffersomyces stipitis (strain ATCC 58785 / CBS 6054 / NBRC 10063 / NRRL Y-11545) (Yeast) protein is Altered inheritance of mitochondria protein 9, mitochondrial (AIM9).